The sequence spans 619 residues: Chaperone protein DnaK (619 aa).

Thr175 bears the Phosphothreonine; by autocatalysis mark. Residues 578 to 619 are disordered; sequence NGGAQGEGFDPNNMGGANAGTGAANSNDDNVVDADFEVQDDK. Residues 589–606 show a composition bias toward low complexity; sequence NNMGGANAGTGAANSNDD. Residues 607–619 are compositionally biased toward acidic residues; the sequence is NVVDADFEVQDDK.

The protein belongs to the heat shock protein 70 family.

Its function is as follows. Acts as a chaperone. The polypeptide is Chaperone protein DnaK (Clostridium perfringens (strain SM101 / Type A)).